The primary structure comprises 151 residues: Pollen allergen Sal k 5.0101 (151 aa).

Cystine bridges form between Cys17/Cys88, Cys20/Cys132, and Cys41/Cys76. Asn43 carries N-linked (GlcNAc...) asparagine glycosylation.

It belongs to the Ole e I family. In terms of processing, N-glycosylated. Contains fucose monosaccharides in the glycan structure. Expressed in pollen (at protein level).

The protein localises to the secreted. The chain is Pollen allergen Sal k 5.0101 from Kali turgidum (Prickly saltwort).